A 490-amino-acid chain; its full sequence is MNISTIVSNLKDLILEVRAPYDLEITGVSNHSSKVKKGDLFICRRGEKFDSHEIIPEVMEKGAVAVVVEREIDLDFPYIQVFDSRYFEAKVASLFFEDPWKDVLTFGVTGTNGKTTTTMMIYHMLTSLGERGSVLTTAVKRILGNSYYDDITTPDAITILSAMKENREGGGKFFALEVSSHALVQQRVEGVRFDVGIFTNISRDHLDFHGTFENYLKAKLHLFDLLKDDGVAVLNESLADAFNRKSRKITFGTSKNADYRLGNIEVSWEGTQFVLETPDGLLKVFTRAIGDFNAYNAAAAIAALHQLGYDPKDLASSLETFTGVEGRFEVVRGAKKIGLNVVVDFAHSPDALEKLLKNVRKISQGRVIVVFGAGGNSDRGKRPMMSEVASKLADVVILTTDDPRGEDPEQIMEDLIKGIDKRKPYLVLFDRREAIETALTIANRGDSVVIAGRGHERYQIIDEEKKVPFQDREVVEEIIRDKLKGRKYAQ.

Residue Ser32 coordinates UDP-N-acetyl-alpha-D-muramoyl-L-alanyl-D-glutamate. Position 110–116 (110–116 (GTNGKTT)) interacts with ATP. Residues 152–153 (TT), Ser179, Gln185, and Arg187 contribute to the UDP-N-acetyl-alpha-D-muramoyl-L-alanyl-D-glutamate site. At Lys219 the chain carries N6-carboxylysine.

This sequence belongs to the MurCDEF family. MurE subfamily. Carboxylation is probably crucial for Mg(2+) binding and, consequently, for the gamma-phosphate positioning of ATP.

It is found in the cytoplasm. It carries out the reaction UDP-N-acetyl-alpha-D-muramoyl-L-alanyl-D-glutamate + L-lysine + ATP = UDP-N-acetyl-alpha-D-muramoyl-L-alanyl-gamma-D-glutamyl-L-lysine + ADP + phosphate + H(+). The enzyme catalyses UDP-N-acetyl-alpha-D-muramoyl-L-alanyl-D-glutamate + D-lysine + ATP = N(6)-(UDP-N-acetyl-alpha-D-muramoyl-L-alanyl-gamma-D-glutamyl)-D-lysine + ADP + phosphate + H(+). It functions in the pathway cell wall biogenesis; peptidoglycan biosynthesis. Catalyzes the addition of both L- and D-lysine to the nucleotide precursor UDP-N-acetylmuramoyl-L-alanyl-D-glutamate (UMAG) in the biosynthesis of bacterial cell-wall peptidoglycan. Is also able to use meso-diaminopimelate as the amino acid substrate in vitro, although much less efficiently. This is UDP-N-acetylmuramoyl-L-alanyl-D-glutamate--LD-lysine ligase (murE) from Thermotoga maritima (strain ATCC 43589 / DSM 3109 / JCM 10099 / NBRC 100826 / MSB8).